Consider the following 333-residue polypeptide: Taste receptor type 2 member 123 (333 aa).

Over 1-13 the chain is Extracellular; sequence MFSQKINYSHLFT. Residue Asn-7 is glycosylated (N-linked (GlcNAc...) asparagine). A helical membrane pass occupies residues 14–34; sequence FSITLYVEIVTGILGHGFIAL. Topologically, residues 35–60 are cytoplasmic; it reads VNIMDWVKRRRISSVDQILTALALTR. Residues 61–81 traverse the membrane as a helical segment; it reads FIYVLSMLICILLFMLCPHLP. The Extracellular segment spans residues 82 to 90; the sequence is RRSEMLSAM. Residues 91–111 form a helical membrane-spanning segment; the sequence is GIFWVVNSHFSIWLTTCLGVF. The Cytoplasmic segment spans residues 112-134; it reads YFLKIANFSNSFFLYLKWRVKKV. Residues 135–155 traverse the membrane as a helical segment; the sequence is ILIIILASLIFLTLHILSLGI. At 156–205 the chain is on the extracellular side; the sequence is YDQFSIAAYVGNMSYSLTDLTQFSSTFLFSNSSNVFLITNSSHVFLPINS. 3 N-linked (GlcNAc...) asparagine glycosylation sites follow: Asn-167, Asn-186, and Asn-195. Residues 206–226 traverse the membrane as a helical segment; that stretch reads LFMLIPFTVSLVAFLMLIFSL. Topologically, residues 227 to 253 are cytoplasmic; sequence WKHHKKMQVNAKQPRDVSTMAHIKALQ. A helical membrane pass occupies residues 254 to 274; it reads TVFSFLLLYAIYLLFLIIGIL. Residues 275-281 are Extracellular-facing; it reads NLGLMEK. Residues 282–302 traverse the membrane as a helical segment; the sequence is IVILIFDHISGAVFPISHSFV. Residues 303–333 lie on the Cytoplasmic side of the membrane; sequence LILGNSKLRQASLSVLPCLRCQSKDMDTMGL.

It belongs to the G-protein coupled receptor T2R family. In terms of tissue distribution, expressed in subsets of taste receptor cells of the tongue and palate epithelium and exclusively in gustducin-positive cells. Expressed in the duodenum, antrum and fundus (part of the stomach).

It is found in the membrane. Functionally, gustducin-coupled receptor implicated in the perception of bitter compounds in the oral cavity and the gastrointestinal tract. Signals through PLCB2 and the calcium-regulated cation channel TRPM5. This Mus musculus (Mouse) protein is Taste receptor type 2 member 123 (Tas2r123).